Here is a 315-residue protein sequence, read N- to C-terminus: Lipoyl synthase (315 aa).

The tract at residues 1 to 33 (MADMPPVLRHPEKAHRPDQPQPKKPDWIRVKAP) is disordered. Residues 9-29 (RHPEKAHRPDQPQPKKPDWIR) are compositionally biased toward basic and acidic residues. The [4Fe-4S] cluster site is built by Cys54, Cys59, Cys65, Cys80, Cys84, Cys87, and Ser294. A Radical SAM core domain is found at 66–283 (WSQGHATMMI…EKAAYGKGFL (218 aa)).

Belongs to the radical SAM superfamily. Lipoyl synthase family. The cofactor is [4Fe-4S] cluster.

It is found in the cytoplasm. The enzyme catalyses [[Fe-S] cluster scaffold protein carrying a second [4Fe-4S](2+) cluster] + N(6)-octanoyl-L-lysyl-[protein] + 2 oxidized [2Fe-2S]-[ferredoxin] + 2 S-adenosyl-L-methionine + 4 H(+) = [[Fe-S] cluster scaffold protein] + N(6)-[(R)-dihydrolipoyl]-L-lysyl-[protein] + 4 Fe(3+) + 2 hydrogen sulfide + 2 5'-deoxyadenosine + 2 L-methionine + 2 reduced [2Fe-2S]-[ferredoxin]. Its pathway is protein modification; protein lipoylation via endogenous pathway; protein N(6)-(lipoyl)lysine from octanoyl-[acyl-carrier-protein]: step 2/2. Functionally, catalyzes the radical-mediated insertion of two sulfur atoms into the C-6 and C-8 positions of the octanoyl moiety bound to the lipoyl domains of lipoate-dependent enzymes, thereby converting the octanoylated domains into lipoylated derivatives. The protein is Lipoyl synthase of Paracoccus denitrificans (strain Pd 1222).